Here is a 254-residue protein sequence, read N- to C-terminus: Thiazole synthase (254 aa).

The active-site Schiff-base intermediate with DXP is K95. Residues G156, 182 to 183, and 204 to 205 each bind 1-deoxy-D-xylulose 5-phosphate; these read AG and NT.

The protein belongs to the ThiG family. In terms of assembly, homotetramer. Forms heterodimers with either ThiH or ThiS.

The protein resides in the cytoplasm. It catalyses the reaction [ThiS sulfur-carrier protein]-C-terminal-Gly-aminoethanethioate + 2-iminoacetate + 1-deoxy-D-xylulose 5-phosphate = [ThiS sulfur-carrier protein]-C-terminal Gly-Gly + 2-[(2R,5Z)-2-carboxy-4-methylthiazol-5(2H)-ylidene]ethyl phosphate + 2 H2O + H(+). The protein operates within cofactor biosynthesis; thiamine diphosphate biosynthesis. Functionally, catalyzes the rearrangement of 1-deoxy-D-xylulose 5-phosphate (DXP) to produce the thiazole phosphate moiety of thiamine. Sulfur is provided by the thiocarboxylate moiety of the carrier protein ThiS. In vitro, sulfur can be provided by H(2)S. The protein is Thiazole synthase of Shewanella sp. (strain W3-18-1).